The primary structure comprises 545 residues: Chaperonin GroEL (545 aa).

ATP contacts are provided by residues 29–32, K50, 86–90, G413, 479–481, and D496; these read TLGP, DGTTT, and NAA. Residues 525 to 545 form a disordered region; that stretch reads KPEKEKAPAAAGAPDMGGMDF. The segment covering 532–545 has biased composition (low complexity); the sequence is PAAAGAPDMGGMDF.

This sequence belongs to the chaperonin (HSP60) family. Forms a cylinder of 14 subunits composed of two heptameric rings stacked back-to-back. Interacts with the co-chaperonin GroES.

It is found in the cytoplasm. The enzyme catalyses ATP + H2O + a folded polypeptide = ADP + phosphate + an unfolded polypeptide.. Its function is as follows. Together with its co-chaperonin GroES, plays an essential role in assisting protein folding. The GroEL-GroES system forms a nano-cage that allows encapsulation of the non-native substrate proteins and provides a physical environment optimized to promote and accelerate protein folding. This Deinococcus geothermalis (strain DSM 11300 / CIP 105573 / AG-3a) protein is Chaperonin GroEL.